A 710-amino-acid polypeptide reads, in one-letter code: F-box/WD repeat-containing protein 7 (710 aa).

The tract at residues 1–158 is disordered; sequence MNQELLSVGS…CSSVSDLPAH (158 aa). Serine 26 is modified (phosphoserine). Residues 46–55 are compositionally biased toward basic and acidic residues; sequence RHQEEEHTAR. Residues 69 to 84 show a composition bias toward polar residues; it reads QNDTQQGQVEENNNRF. The segment covering 87 to 132 has biased composition (acidic residues); that stretch reads VDEDSSGNQEEQEEDEEHAGEQEEEEEEEEEEEEMDQESDDFDPSD. The segment covering 133–142 has biased composition (basic and acidic residues); the sequence is DSSREDEHTH. Over residues 143-158 the composition is skewed to polar residues; it reads NSNVTNCSSVSDLPAH. Threonine 208 bears the Phosphothreonine mark. Serine 230 is modified (phosphoserine; by SGK1). One can recognise an F-box domain in the interval 281–327; that stretch reads RDFISLLPKELALYVLSFLEPKDLLQAAQTCRYWRILAEDNLLWREK. WD repeat units lie at residues 381-421, 423-459, 462-501, 503-539, 542-581, 583-621, and 625-662; these read GHDD…RTLV, HTGG…CIHT, GHTS…HVLM, HVAA…CLHT, GHTN…HTLT, HQSL…QTLQ, and KHQS…FIRN.

As to quaternary structure, homodimer; homodimerization plays a role in substrate binding and/or ubiquitination and degradation. Component of the SCF(FBXW7) complex consisting of CUL1, RBX1, SKP1 and FBXW7. Interacts (via F-box domain) with SKP1. Interacts (via F-box domain) with pseudophosphatase STYX; the interaction is direct and prevents FBXW7 interaction with SKP1. Interacts with cyclin-E (CCNE1 or CCNE2). Interacts with PSEN1. Forms a trimeric complex with NOTCH1 and SGK1. Interacts with NOTCH1 intracellular domain/NICD and NOTCH4 intracellular domain/NICD. Interacts with NOTCH2 intracellular domain (N2ICD). Interacts with MYC (when phosphorylated). Interacts with USP28, counteracting ubiquitination of MYC. Interacts (when phosphorylated at Thr-208) with PIN1, disrupting FBXW7 dimerization and promoting FBXW7 autoubiquitination and degradation. Interacts with UBE2QL1. Interacts with FAM83D; promotes FBXW7 degradation. Interacts with MYCN; FBXW7 competes with AURKA for binding to unphosphorylated MYCN but not for binding to phosphorylated MYCN. Interacts with JUN. Found in a complex with JUN and PRR7. Interacts with JUN and PRR7; the interaction inhibits ubiquitination-mediated JUN degradation, promoting its phosphorylation and transcriptional activity. Interacts with NFE2L1. Interacts with NR1D1. Interacts with RICTOR; mediates RICTOR ubiquitination and degradation. Interacts with USP38, counteracting ubiquitination of MYC. Phosphorylation at Thr-208 promotes interaction with PIN1, leading to disrupt FBXW7 dimerization and promoting FBXW7 autoubiquitination and degradation. Phosphorylated by ATM at Ser-26 in response to DNA damage, promoting recruitment to DNA damage sites and 'Lys-63'-linked ubiquitination of phosphorylated XRCC4. In terms of processing, ubiquitinated: autoubiquitinates following phosphorylation at Thr-208 and subsequent interaction with PIN1. Ubiquitination leads to its proteasomal degradation. As to expression, widely expressed with highest levels in brain, heart and testis.

The protein localises to the nucleus. The protein resides in the nucleoplasm. It is found in the chromosome. The protein operates within protein modification; protein ubiquitination. Substrate recognition component of a SCF (SKP1-CUL1-F-box protein) E3 ubiquitin-protein ligase complex which mediates the ubiquitination and subsequent proteasomal degradation of target proteins. Recognizes and binds phosphorylated sites/phosphodegrons within target proteins and thereafter brings them to the SCF complex for ubiquitination. Mediates ubiquitination and subsequent degradation of CCNE1 and MYC. Identified substrates include cyclin-E (CCNE1 or CCNE2), DISC1, JUN, MYC, NOTCH1 released notch intracellular domain (NICD), NOTCH2, MCL1, MLST8, RICTOR and probably PSEN1. Acts as a negative regulator of JNK signaling by binding to phosphorylated JUN and promoting its ubiquitination and subsequent degradation. SCF(FBXW7) complex mediates the ubiquitination and subsequent degradation of NFE2L1. Involved in bone homeostasis and negative regulation of osteoclast differentiation. Regulates the amplitude of the cyclic expression of hepatic core clock genes and genes involved in lipid and glucose metabolism via ubiquitination and proteasomal degradation of their transcriptional repressor NR1D1; CDK1-dependent phosphorylation of NR1D1 is necessary for SCF(FBXW7)-mediated ubiquitination. Also able to promote 'Lys-63'-linked ubiquitination in response to DNA damage. The SCF(FBXW7) complex facilitates double-strand break repair following phosphorylation by ATM: phosphorylation promotes localization to sites of double-strand breaks and 'Lys-63'-linked ubiquitination of phosphorylated XRCC4, enhancing DNA non-homologous end joining. The sequence is that of F-box/WD repeat-containing protein 7 from Mus musculus (Mouse).